The primary structure comprises 399 residues: Argininosuccinate synthase (399 aa).

Alanine 8–serine 16 contributes to the ATP binding site. An L-citrulline-binding site is contributed by tyrosine 87. An ATP-binding site is contributed by glycine 117. The L-aspartate site is built by threonine 119, asparagine 123, and aspartate 124. Asparagine 123 serves as a coordination point for L-citrulline. The L-citrulline site is built by arginine 127, serine 175, glutamate 259, and tyrosine 271.

This sequence belongs to the argininosuccinate synthase family. Type 1 subfamily. As to quaternary structure, homotetramer.

It localises to the cytoplasm. It catalyses the reaction L-citrulline + L-aspartate + ATP = 2-(N(omega)-L-arginino)succinate + AMP + diphosphate + H(+). The protein operates within amino-acid biosynthesis; L-arginine biosynthesis; L-arginine from L-ornithine and carbamoyl phosphate: step 2/3. This is Argininosuccinate synthase from Corynebacterium diphtheriae (strain ATCC 700971 / NCTC 13129 / Biotype gravis).